The following is a 313-amino-acid chain: Protease HtpX homolog (313 aa).

2 helical membrane-spanning segments follow: residues 7–24 and 29–46; these read AMLL…GYLI and GMMI…FSYW. Histidine 130 lines the Zn(2+) pocket. Residue glutamate 131 is part of the active site. Histidine 134 is a binding site for Zn(2+). Transmembrane regions (helical) follow at residues 145-165 and 172-192; these read ITAT…FFGG and PFGF…AMVV. A Zn(2+)-binding site is contributed by glutamate 201. The interval 282–313 is disordered; that stretch reads GNAPPASLREDEPGADGPWGRSASRARKGPWS.

Belongs to the peptidase M48B family. The cofactor is Zn(2+).

The protein resides in the cell inner membrane. This is Protease HtpX homolog from Chelativorans sp. (strain BNC1).